The following is a 511-amino-acid chain: Lysine--tRNA ligase 2 (511 aa).

Over residues 1–11 (MTMEINNTDPS) the composition is skewed to polar residues. Residues 1-21 (MTMEINNTDPSENMPLPDDVD) are disordered. Residues Glu421 and Glu428 each contribute to the Mg(2+) site.

The protein belongs to the class-II aminoacyl-tRNA synthetase family. As to quaternary structure, homodimer. Mg(2+) is required as a cofactor.

The protein localises to the cytoplasm. The catalysed reaction is tRNA(Lys) + L-lysine + ATP = L-lysyl-tRNA(Lys) + AMP + diphosphate. This Methanosarcina acetivorans (strain ATCC 35395 / DSM 2834 / JCM 12185 / C2A) protein is Lysine--tRNA ligase 2.